We begin with the raw amino-acid sequence, 262 residues long: Probable ketoamine kinase TTHA1179 (262 aa).

Alanine 79 to leucine 81 is an ATP binding site. Aspartate 172 (proton acceptor) is an active-site residue.

The protein belongs to the fructosamine kinase family.

It carries out the reaction N(6)-(D-ribulosyl)-L-lysine + ATP = N(6)-(3-O-phospho-D-ribulosyl)-L-lysine + ADP + H(+). The catalysed reaction is N(6)-(D-erythrulosyl)-L-lysine + ATP = N(6)-(3-O-phospho-D-erythrulosyl)-L-lysine + ADP + H(+). The enzyme catalyses N(6)-D-ribulosyl-L-lysyl-[protein] + ATP = N(6)-(3-O-phospho-D-ribulosyl)-L-lysyl-[protein] + ADP + H(+). It catalyses the reaction N(6)-(D-erythrulosyl)-L-lysyl-[protein] + ATP = N(6)-(3-O-phospho-D-erythrulosyl)-L-lysyl-[protein] + ADP + H(+). Ketoamine kinase that phosphorylates ketoamines, such as erythruloselysine and ribuloselysine, on the third carbon of the sugar moiety to generate ketoamine 3-phosphate. Has higher activity on free lysine (erythruloselysine and ribuloselysine), than on ribuloselysine and erythruloselysine residues on glycated proteins. In Thermus thermophilus (strain ATCC 27634 / DSM 579 / HB8), this protein is Probable ketoamine kinase TTHA1179.